Here is a 569-residue protein sequence, read N- to C-terminus: Linoleate hydratase (569 aa).

Tyr87 provides a ligand contact to FAD. Tyr205 acts as the Proton donor in catalysis. The FAD site is built by Val254, Ser300, and Thr524.

This sequence belongs to the oleate hydratase family. FAD serves as cofactor.

It localises to the cell membrane. The protein localises to the cytoplasm. It carries out the reaction (9Z,12Z)-octadecadienoate + H2O = (10S)-hydroxy-(12Z)-octadecenoate. It catalyses the reaction (10E,12Z)-octadecadienoate + H2O = (10S)-hydroxy-(12Z)-octadecenoate. The enzyme catalyses (9Z)-octadecenoate + H2O = 10-hydroxyoctadecanoate. The catalysed reaction is (10E)-octadecenoate + H2O = 10-hydroxyoctadecanoate. It carries out the reaction (9E,11E)-octadecadienoate + H2O = 10-hydroxy-(11E)-octadecenoate. It catalyses the reaction (9Z,11E)-octadecadienoate + H2O = 10-hydroxy-(11E)-octadecenoate. The enzyme catalyses (9Z)-hexadecenoate + H2O = 10-hydroxyhexadecanoate. The catalysed reaction is (9Z,12Z,15Z)-octadecatrienoate + H2O = (10S)-hydroxy-(12Z,15Z)-octadecadienoate. It carries out the reaction (6Z,9Z,12Z)-octadecatrienoate + H2O = (10S)-hydroxy-(6Z,12Z)-octadecadienoate. It catalyses the reaction (6Z,9Z,12Z,15Z)-octadecatetraenoate + H2O = (10S)-hydroxy-(6Z,12Z,15Z)-octadecatrienoate. It functions in the pathway lipid metabolism; fatty acid metabolism. The addition of NADH or NADPH highly increases catalytic activity, likely by reducing the cofactor FAD to FADH2. The hydration and dehydration reactions are strongly inhibited by Ag(+), Fe(2+), Cu(2+), Zn(2+), Hg(2+), and Fe(3+). Functionally, is involved in a saturation metabolic pathway of polyunsaturated fatty acids, that detoxifies unsaturated fatty acids and generates hydroxy fatty acids, oxo fatty acids, conjugated fatty acids such as conjugated linoleic acids (CLAs), and partially saturated trans-fatty acids as intermediates. CLA-HY catalyzes the hydration and dehydration steps in the production of 10-hydroxy-cis-12-octadecenoate, trans-10,cis-12-CLA, cis-9,trans-11-CLA, trans-9,trans-11-CLA, oleate and trans-10-octadecenoate during linoleate metabolism. Is also able to hydrate palmitoleic acid (cis-9-hexadecenoic acid), oleic acid, alpha-linolenic acid, gamma-linolenic acid, and stearidonic acid into the corresponding 10-hydroxy fatty acids, and dehydrate 10-hydroxy-cis-12,cis-15-octadecadienoic acid, 10-hydroxy-cis-6,cis-12-octadecadienoic acid, and 10-hydroxyoctadecanoic acid into the corresponding fatty acids with cis double bonds at the Delta9 position. As part of the gut microbiome, this enzyme modifies host fatty acid composition and is expected to improve human health by altering lipid metabolism related to the onset of metabolic syndrome. Shows regioselectivity for Delta9 double bond hydration, generating C10 hydroxy groups in the (S)-configuration with high enantioselectivity, when another double bond is in position 12. Is not able to hydrate fatty acids with a trans carbon-carbon double bond at Delta9 position (elaidic acid, trans-9-octadecenoic acid), fatty acid esters (methyl linoleate, monolinolein, dilinolein, and trilinolein), and conjugated fatty acids (conjugated linoleic acids), as well as fatty acids with other chain lengths, such as myristoleic acid (cis-9-tetradecenoic acid), arachidonic acid (cis-5,cis-8,cis-11,cis-14-eicosatetraenoic acid), EPA (cis-5,cis-8,cis-11,cis-14,cis-17-eicosapentaenoic acid), DHA (cis-4,cis-7,cis-10,cis-13,cis-16,cis-19-docosahexaenoic acid) and fatty acids with a cis carbon-carbon double bond at Delta11 position, such as cis-vaccenic acid and cis-11-octadecenoic acid, or fatty alcohols, such as linoleyl alcohol. Is not able to dehydrate 12-hydroxy, 3-hydroxy, and 9-hydroxy fatty acids. The protein is Linoleate hydratase of Lactiplantibacillus plantarum (Lactobacillus plantarum).